Consider the following 396-residue polypeptide: 1-deoxy-D-xylulose 5-phosphate reductoisomerase (396 aa).

5 residues coordinate NADPH: Thr13, Gly14, Ser15, Ile16, and Asn127. Lys128 contributes to the 1-deoxy-D-xylulose 5-phosphate binding site. Residue Glu129 coordinates NADPH. Asp153 contacts Mn(2+). The 1-deoxy-D-xylulose 5-phosphate site is built by Ser154, Glu155, Ser184, and His207. Glu155 provides a ligand contact to Mn(2+). NADPH is bound at residue Gly213. Residues Ser220, Asn225, Lys226, and Glu229 each coordinate 1-deoxy-D-xylulose 5-phosphate. Mn(2+) is bound at residue Glu229.

This sequence belongs to the DXR family. It depends on Mg(2+) as a cofactor. Mn(2+) is required as a cofactor.

The enzyme catalyses 2-C-methyl-D-erythritol 4-phosphate + NADP(+) = 1-deoxy-D-xylulose 5-phosphate + NADPH + H(+). The protein operates within isoprenoid biosynthesis; isopentenyl diphosphate biosynthesis via DXP pathway; isopentenyl diphosphate from 1-deoxy-D-xylulose 5-phosphate: step 1/6. Functionally, catalyzes the NADPH-dependent rearrangement and reduction of 1-deoxy-D-xylulose-5-phosphate (DXP) to 2-C-methyl-D-erythritol 4-phosphate (MEP). The protein is 1-deoxy-D-xylulose 5-phosphate reductoisomerase of Pseudomonas putida (strain W619).